A 215-amino-acid polypeptide reads, in one-letter code: Probable phosphoglycerate mutase GpmB (215 aa).

Residues 8–15 (RHGETQWN), 21–22 (QG), Arg-58, 82–85 (ELDM), 104–105 (RR), and 151–152 (GI) each bind substrate. The Tele-phosphohistidine intermediate role is filled by His-9. Glu-82 functions as the Proton donor/acceptor in the catalytic mechanism.

It belongs to the phosphoglycerate mutase family. GpmB subfamily.

The catalysed reaction is (2R)-2-phosphoglycerate = (2R)-3-phosphoglycerate. The protein operates within carbohydrate degradation; glycolysis; pyruvate from D-glyceraldehyde 3-phosphate: step 3/5. The sequence is that of Probable phosphoglycerate mutase GpmB from Enterobacter sp. (strain 638).